An 863-amino-acid chain; its full sequence is Dynamin-3 (863 aa).

A Dynamin-type G domain is found at 28 to 294 (LLELPQIAVV…LTNHIRDTLP (267 aa)). Residues 38–45 (GGQSAGKS) are G1 motif. 38-46 (GGQSAGKSS) provides a ligand contact to GTP. Positions 64 to 66 (VTR) are G2 motif. The G3 motif stretch occupies residues 136-139 (DLPG). Residues 205–208 (TKLD) form a G4 motif region. 205-211 (TKLDLMD) serves as a coordination point for GTP. Residue Tyr-231 is modified to Phosphotyrosine. The tract at residues 235-238 (VNRS) is G5 motif. A GTP-binding site is contributed by 236–239 (NRSQ). An N6-acetyllysine modification is found at Lys-299. Residues 515-621 (QVIRKGWLTV…WKASLLRAGV (107 aa)) enclose the PH domain. Position 593 is a phosphotyrosine (Tyr-593). Residue Lys-594 is modified to N6-acetyllysine. Disordered regions lie at residues 626-647 (SVGS…SMDP) and 742-863 (ATVS…SLLD). Positions 627–642 (VGSNKTENDENGQAEN) are enriched in polar residues. The GED domain maps to 653–744 (VETIRNLVDS…IIGDINTATV (92 aa)). Residues Ser-763 and Ser-767 each carry the phosphoserine modification. Pro residues-rich tracts occupy residues 791 to 816 (PAIP…PPFP) and 826 to 849 (PQVP…PSPT). A Phosphoserine modification is found at Ser-847.

This sequence belongs to the TRAFAC class dynamin-like GTPase superfamily. Dynamin/Fzo/YdjA family.

The protein resides in the cytoplasm. It localises to the cytoskeleton. It catalyses the reaction GTP + H2O = GDP + phosphate + H(+). Its function is as follows. Microtubule-associated force-producing protein involved in producing microtubule bundles and able to bind and hydrolyze GTP. Most probably involved in vesicular trafficking processes, in particular endocytosis. The protein is Dynamin-3 (Dnm3) of Mus musculus (Mouse).